Here is a 522-residue protein sequence, read N- to C-terminus: Ribonuclease Y (522 aa).

A helical membrane pass occupies residues 3 to 23; sequence ELIMYILATAVVSIGVGIVAG. The KH domain occupies 212–272; the sequence is CVSIFNIESD…VRREVARLSL (61 aa). One can recognise an HD domain in the interval 338 to 431; it reads LLQHSREVAK…VQVCDAISGA (94 aa).

It belongs to the RNase Y family.

It is found in the cell membrane. Endoribonuclease that initiates mRNA decay. This chain is Ribonuclease Y, found in Cytophaga hutchinsonii (strain ATCC 33406 / DSM 1761 / CIP 103989 / NBRC 15051 / NCIMB 9469 / D465).